The sequence spans 348 residues: MASRKEGSGAAGGGFGSAKGKGKAAAAGDSAVKQVQIDGLVVLKIIKHYQEEGQGNEVVQGVLLGLVVDDRLEITNCFPFPQHTEDDADFDEVQYQMEMMRSLRHVNIDHLHVGWYQSTYYGSFVTRALLDSQFSYQHAIEESVVLIYDPIKTAQGSLSLKAYRLTPKLMEVCKEKDFSPEALKKANIAYENMFEEVPIVIKNSYLINVMLWELEKKSAVADRHELLSLASSNHLGKSLQLLMDRVDEMSQDIVKYNTYLRNVSKQQQQKHQYQQRRQQENIQRQSRGEPPLPEEDINKLFKPPQPPPRMESLLIAGQINTYCQNIKEFNAQNLGKLFMAQALQDYNN.

One can recognise an MPN domain in the interval 35–169; sequence VQIDGLVVLK…LKAYRLTPKL (135 aa). Low complexity predominate over residues 267–285; it reads QQQKHQYQQRRQQENIQRQ. The interval 267-311 is disordered; it reads QQQKHQYQQRRQQENIQRQSRGEPPLPEEDINKLFKPPQPPPRME.

This sequence belongs to the eIF-3 subunit H family. In terms of assembly, component of the eukaryotic translation initiation factor 3 (eIF-3) complex, which is composed of 13 subunits: EIF3A, EIF3B, EIF3C, EIF3D, EIF3E, EIF3F, EIF3G, EIF3H, EIF3I, EIF3J, EIF3K, EIF3L and EIF3M.

It is found in the cytoplasm. Functionally, component of the eukaryotic translation initiation factor 3 (eIF-3) complex, which is involved in protein synthesis of a specialized repertoire of mRNAs and, together with other initiation factors, stimulates binding of mRNA and methionyl-tRNAi to the 40S ribosome. The eIF-3 complex specifically targets and initiates translation of a subset of mRNAs involved in cell proliferation. The sequence is that of Eukaryotic translation initiation factor 3 subunit H from Taeniopygia guttata (Zebra finch).